Here is a 140-residue protein sequence, read N- to C-terminus: Holo-[acyl-carrier-protein] synthase (140 aa).

Mg(2+) is bound by residues Asp7 and Glu58.

The protein belongs to the P-Pant transferase superfamily. AcpS family. It depends on Mg(2+) as a cofactor.

It is found in the cytoplasm. It catalyses the reaction apo-[ACP] + CoA = holo-[ACP] + adenosine 3',5'-bisphosphate + H(+). In terms of biological role, transfers the 4'-phosphopantetheine moiety from coenzyme A to a Ser of acyl-carrier-protein. In Chloroflexus aggregans (strain MD-66 / DSM 9485), this protein is Holo-[acyl-carrier-protein] synthase.